Reading from the N-terminus, the 522-residue chain is MGRDKEDKTEMDSVVPWMRAPVDVSNVENCALDTLPCLNPKLKKALENMGISSLFPVQVAVWHETIGPGGFERDICVNSPTGSGKTLSYALPIVQLLASRPVRCLRALVVLPTRDLALQVKDVFDAIAPAVGLSVGSAVGQSSIAGEISQLIKTPKLDAGICYDPDDLSQNLESAVDILVATPGRLMDHINNTKGFTLEHLRYLVVDETDRLLREAYQSWLPTVLQLTQTSDDSLFPSFTPFVPSAFGSLQTVRRQSVERGFKGKPYPRLVKMVLSATLTQDPSKLIQLDLHHPLFMTTGGSRYRLPEKLECLRLICETGMKPVYLVALLKSWEGEKCIIFTSSVETTRRLCKLLNFFGDPKIKAKEYSGGLNQSLRSKELKAFRKGDIQVLVASDALTRGMDVKGVTNVINYDMPPFAKTFIHRAGRTARAGQAGRCFTLLSNHEVRRFSKLLEKVGSDSCPIYPIPPTSLDSIRATYTPALEKLKELVESEAPKKGRQAFRHNSRTGNSQTKLNKPRSEA.

The short motif at 30–59 is the Q motif element; the sequence is CALDTLPCLNPKLKKALENMGISSLFPVQV. Residues 66–297 form the Helicase ATP-binding domain; it reads IGPGGFERDI…QLDLHHPLFM (232 aa). ATP is bound at residue 79 to 86; that stretch reads SPTGSGKT. Residues 207–210 carry the DEAD box motif; sequence DETD. Positions 325-475 constitute a Helicase C-terminal domain; sequence YLVALLKSWE…PIPPTSLDSI (151 aa). The interval 490-522 is disordered; the sequence is VESEAPKKGRQAFRHNSRTGNSQTKLNKPRSEA. Residues 497–506 are compositionally biased toward basic residues; sequence KGRQAFRHNS.

Belongs to the DEAD box helicase family. DDX51/DBP6 subfamily.

It catalyses the reaction ATP + H2O = ADP + phosphate + H(+). The polypeptide is DEAD-box ATP-dependent RNA helicase 1 (RH1) (Arabidopsis thaliana (Mouse-ear cress)).